A 460-amino-acid polypeptide reads, in one-letter code: Diguanylate cyclase DosC (460 aa).

H98 lines the heme pocket. The region spanning 325–458 is the GGDEF domain; that stretch reads TPLSVLIIDV…GRNRVELWKA (134 aa). D333 serves as a coordination point for Mg(2+). Substrate contacts are provided by N341 and D350. A Mg(2+)-binding site is contributed by D376. The Proton acceptor role is filled by D376.

Heme serves as cofactor. Mg(2+) is required as a cofactor.

The enzyme catalyses 2 GTP = 3',3'-c-di-GMP + 2 diphosphate. Its pathway is purine metabolism; 3',5'-cyclic di-GMP biosynthesis. Its function is as follows. Globin-coupled heme-based oxygen sensor protein displaying diguanylate cyclase (DGC) activity in response to oxygen availability. Thus, catalyzes the synthesis of cyclic diguanylate (c-di-GMP) via the condensation of 2 GTP molecules. Cyclic-di-GMP is a second messenger which controls cell surface-associated traits in bacteria. The chain is Diguanylate cyclase DosC (dosC) from Shigella boydii serotype 4 (strain Sb227).